The following is a 709-amino-acid chain: Copper amine oxidase vicK1 (709 aa).

The N-terminal stretch at 1–20 (MKLFLLFTLTLVNIFSVSLQ) is a signal peptide. D365 functions as the Proton acceptor in the catalytic mechanism. A disulfide bond links C383 and C408. Y448 acts as the Schiff-base intermediate with substrate; via topaquinone in catalysis. The residue at position 448 (Y448) is a 2',4',5'-topaquinone. Cu cation is bound by residues H496 and H498. 8 residues coordinate Ca(2+): D505, L506, D507, E548, F641, E645, D651, and L652. H662 lines the Cu cation pocket.

This sequence belongs to the copper/topaquinone oxidase family. As to quaternary structure, homodimer; disulfide-linked. Cu cation serves as cofactor. Ca(2+) is required as a cofactor. It depends on L-topaquinone as a cofactor. In terms of processing, topaquinone (TPQ) is generated by copper-dependent autoxidation of a specific tyrosyl residue.

The protein operates within mycotoxin biosynthesis. Copper amine oxidase, part of the gene cluster that mediates the biosynthesis of the secondary metabolite victorin, the molecular basis for Victoria blight of oats. Within the pathway, vicK1 catalyzes the oxidative deamination of the N-terminal glycyl moiety of the hexapeptides in order to produce the active glyoxylate form victorins. The pathway starts with the processing of the precursor vicA1 by several endopeptidases including kexin proteases as well as the cluster-specific S28 family peptidases vicPa and vicPb to produce 7 identical copies of the hexapeptide Gly-Leu-Lys-Leu-Ala-Phe. After being excised from the precursor peptide, the core peptides are cyclized and modified post-translationally by enzymes encoded within the gene cluster. The ustYa family oxidase vicYb is required for the formation of the macrocycle in victorin and the copper amine oxidases (CAOs) vicK1 and vicK2 are responsible for converting victorin to the active form by oxidizing the N-terminal glycyl residue in the peptides to glyoxylate. Relaxed substrate specificity of enzymes in the victorin biosynthetic pathway results in a metabolic grid that produces a set of analogs including victorinines B, C, E or HV-toxin M. The sequence is that of Copper amine oxidase vicK1 from Bipolaris victoriae (strain FI3) (Victoria blight of oats agent).